Reading from the N-terminus, the 61-residue chain is MAKKALVNKAAKKPKFAVRAYTRCNRCGRPHAVFRKFGLCRICLREMAHAGELPGIHKSSW.

Zn(2+) contacts are provided by Cys-24, Cys-27, Cys-40, and Cys-43.

Belongs to the universal ribosomal protein uS14 family. Zinc-binding uS14 subfamily. Part of the 30S ribosomal subunit. Contacts proteins S3 and S10. Zn(2+) serves as cofactor.

Binds 16S rRNA, required for the assembly of 30S particles and may also be responsible for determining the conformation of the 16S rRNA at the A site. This chain is Small ribosomal subunit protein uS14B, found in Mycobacteroides abscessus (strain ATCC 19977 / DSM 44196 / CCUG 20993 / CIP 104536 / JCM 13569 / NCTC 13031 / TMC 1543 / L948) (Mycobacterium abscessus).